The chain runs to 610 residues: MPEYRSKTSTYGRNMAGARALWRATGMKDDDFQKPIIAIANSFTQFVPGHVHLKDLGQLVAREIERLGGVAKEFNTIAVDDGIAMGHDGMLYSLPSREIIADSVEYMANAHCADALVCISNCDKITPGMLMASLRLNIPTVFVSGGPMEAGKTTLADHKLDLVDAMVLAADPHASDEEVATVERSACPTCGSCSGMFTANSMNCLTEALGLSLPGNGTVVATHSDRKQLFLNAGRTVIELCHRWYGAEDATALPRGIATFAAFENAITLDIAMGGSTNTILHLLAAAQEAEVSFTMQDIDRLSRNVPQLCKVAPNTQKYHIEDVHRAGGIFGILAELARGNLLHTDVATVHSKTLGEAIATWDIIGTQDEAVHTFYKAGSAGIPTQVAFSQSTRWPSLDTDRTEGCIRDMEHAFSKEGGLAVLYGNIAQDGCVVKTAGVDASIHVFEGSALVYESQEAAVKGILSDEVQPGMIVVIRYEGPKGGPGMQEMLYPTSYLKSKGLGKQCALFTDGRFSGGTSGLSIGHASPEAAAGGAIGLIRDGDRIRIDIPQRAINVLISEEELASRRLEQHAIGWKPAQSRTRKVSSALKAYALLATSADKGAVRNKTLL.

Aspartate 81 provides a ligand contact to Mg(2+). Cysteine 122 is a [2Fe-2S] cluster binding site. Positions 123 and 124 each coordinate Mg(2+). Lysine 124 carries the N6-carboxylysine modification. Cysteine 193 lines the [2Fe-2S] cluster pocket. Glutamate 489 is a binding site for Mg(2+). Serine 515 (proton acceptor) is an active-site residue.

The protein belongs to the IlvD/Edd family. As to quaternary structure, homodimer. The cofactor is [2Fe-2S] cluster. It depends on Mg(2+) as a cofactor.

It catalyses the reaction (2R)-2,3-dihydroxy-3-methylbutanoate = 3-methyl-2-oxobutanoate + H2O. It carries out the reaction (2R,3R)-2,3-dihydroxy-3-methylpentanoate = (S)-3-methyl-2-oxopentanoate + H2O. The protein operates within amino-acid biosynthesis; L-isoleucine biosynthesis; L-isoleucine from 2-oxobutanoate: step 3/4. It participates in amino-acid biosynthesis; L-valine biosynthesis; L-valine from pyruvate: step 3/4. In terms of biological role, functions in the biosynthesis of branched-chain amino acids. Catalyzes the dehydration of (2R,3R)-2,3-dihydroxy-3-methylpentanoate (2,3-dihydroxy-3-methylvalerate) into 2-oxo-3-methylpentanoate (2-oxo-3-methylvalerate) and of (2R)-2,3-dihydroxy-3-methylbutanoate (2,3-dihydroxyisovalerate) into 2-oxo-3-methylbutanoate (2-oxoisovalerate), the penultimate precursor to L-isoleucine and L-valine, respectively. This Xylella fastidiosa (strain M23) protein is Dihydroxy-acid dehydratase.